A 401-amino-acid polypeptide reads, in one-letter code: Nicotinate phosphoribosyltransferase (401 aa).

His-221 is modified (phosphohistidine; by autocatalysis).

The protein belongs to the NAPRTase family. In terms of processing, transiently phosphorylated on a His residue during the reaction cycle. Phosphorylation strongly increases the affinity for substrates and increases the rate of nicotinate D-ribonucleotide production. Dephosphorylation regenerates the low-affinity form of the enzyme, leading to product release.

The enzyme catalyses nicotinate + 5-phospho-alpha-D-ribose 1-diphosphate + ATP + H2O = nicotinate beta-D-ribonucleotide + ADP + phosphate + diphosphate. It participates in cofactor biosynthesis; NAD(+) biosynthesis; nicotinate D-ribonucleotide from nicotinate: step 1/1. Its function is as follows. Catalyzes the synthesis of beta-nicotinate D-ribonucleotide from nicotinate and 5-phospho-D-ribose 1-phosphate at the expense of ATP. The chain is Nicotinate phosphoribosyltransferase from Edwardsiella ictaluri (strain 93-146).